The primary structure comprises 319 residues: Nucleotide-binding protein Mvan_2698 (319 aa).

Over residues 1-12 (MTEQGMHQELRE) the composition is skewed to basic and acidic residues. The segment at 1 to 26 (MTEQGMHQELREGAGTAGDEGGLEAA) is disordered. 43–50 (GLSGAGRG) contributes to the ATP binding site. 94–97 (DVRS) lines the GTP pocket.

The protein belongs to the RapZ-like family.

Displays ATPase and GTPase activities. The sequence is that of Nucleotide-binding protein Mvan_2698 from Mycolicibacterium vanbaalenii (strain DSM 7251 / JCM 13017 / BCRC 16820 / KCTC 9966 / NRRL B-24157 / PYR-1) (Mycobacterium vanbaalenii).